The chain runs to 148 residues: UPF0179 protein Mboo_1959 (148 aa).

It belongs to the UPF0179 family.

The protein is UPF0179 protein Mboo_1959 of Methanoregula boonei (strain DSM 21154 / JCM 14090 / 6A8).